Reading from the N-terminus, the 280-residue chain is L-proline cis-4-hydroxylase (280 aa).

Fe cation is bound by residues His106, Asp108, and His154. Arg164 serves as a coordination point for 2-oxoglutarate.

It belongs to the L-proline cis-4-/cis-3-hydroxylase family. Fe(2+) serves as cofactor.

The catalysed reaction is L-proline + 2-oxoglutarate + O2 = cis-4-hydroxy-L-proline + succinate + CO2. Its activity is regulated as follows. Inhibited by metal ions such as Co(2+), Zn(2+), Cu(2+) or Ni(2+). Is also inhibited by EDTA or diethylpyrocarbonate (DEPC) in vitro. Unlike the procollagen-proline cis-3- and trans-4-hydroxylases from mammals, does not necessarily require L-ascorbate for activity although it does increase the activity of the enzyme. Dioxygenase that catalyzes the 2-oxoglutarate-dependent selective hydroxylation of free L-proline to cis-4-hydroxy-L-proline (cis-4-Hyp). The chain is L-proline cis-4-hydroxylase from Mesorhizobium japonicum (strain LMG 29417 / CECT 9101 / MAFF 303099) (Mesorhizobium loti (strain MAFF 303099)).